A 122-amino-acid polypeptide reads, in one-letter code: Ribonuclease P protein component (122 aa).

This sequence belongs to the RnpA family. As to quaternary structure, consists of a catalytic RNA component (M1 or rnpB) and a protein subunit.

The catalysed reaction is Endonucleolytic cleavage of RNA, removing 5'-extranucleotides from tRNA precursor.. Functionally, RNaseP catalyzes the removal of the 5'-leader sequence from pre-tRNA to produce the mature 5'-terminus. It can also cleave other RNA substrates such as 4.5S RNA. The protein component plays an auxiliary but essential role in vivo by binding to the 5'-leader sequence and broadening the substrate specificity of the ribozyme. The protein is Ribonuclease P protein component of Lactobacillus gasseri (strain ATCC 33323 / DSM 20243 / BCRC 14619 / CIP 102991 / JCM 1131 / KCTC 3163 / NCIMB 11718 / NCTC 13722 / AM63).